The following is a 370-amino-acid chain: Integrin-linked kinase-associated serine/threonine phosphatase 2C (370 aa).

An N-acetylmethionine modification is found at M1. Positions 1–69 (MDLFGDLPEP…SDEEKNGSEE (69 aa)) are disordered. At S13 the chain carries Phosphoserine. Over residues 33–45 (SSGDSGSLDTSLS) the composition is skewed to low complexity. Positions 46-69 (EEVKNEGKGAKRKASDEEKNGSEE) are enriched in basic and acidic residues. In terms of domain architecture, PPM-type phosphatase spans 86–368 (KGYVAERKGE…DNVTVMVVRI (283 aa)). Mn(2+) is bound by residues D130 and G131. K188 is subject to N6-acetyllysine. Positions 304 and 359 each coordinate Mn(2+).

It belongs to the PP2C family. Interacts with ILK. Mg(2+) serves as cofactor. Mn(2+) is required as a cofactor.

Its subcellular location is the cytoplasm. The enzyme catalyses O-phospho-L-seryl-[protein] + H2O = L-seryl-[protein] + phosphate. It catalyses the reaction O-phospho-L-threonyl-[protein] + H2O = L-threonyl-[protein] + phosphate. Functionally, protein phosphatase that may play a role in regulation of cell cycle progression via dephosphorylation of its substrates whose appropriate phosphorylation states might be crucial for cell proliferation. Selectively associates with integrin linked kinase (ILK), to modulate cell adhesion and growth factor signaling. Inhibits the ILK-GSK3B signaling axis and may play an important role in inhibiting oncogenic transformation. The polypeptide is Integrin-linked kinase-associated serine/threonine phosphatase 2C (ILKAP) (Bos taurus (Bovine)).